The chain runs to 839 residues: Probable beta-glucosidase I (839 aa).

The N-linked (GlcNAc...) asparagine glycan is linked to Asn-197. Residue Asp-225 is part of the active site. The PA14 domain occupies 395-555 (DGKTGFSFKV…GQEELISNAV (161 aa)). A glycan (N-linked (GlcNAc...) asparagine) is linked at Asn-620.

Belongs to the glycosyl hydrolase 3 family.

The protein resides in the secreted. It catalyses the reaction Hydrolysis of terminal, non-reducing beta-D-glucosyl residues with release of beta-D-glucose.. It functions in the pathway glycan metabolism; cellulose degradation. In terms of biological role, beta-glucosidases are one of a number of cellulolytic enzymes involved in the degradation of cellulosic biomass. Catalyzes the last step releasing glucose from the inhibitory cellobiose. The protein is Probable beta-glucosidase I (bglI) of Aspergillus flavus (strain ATCC 200026 / FGSC A1120 / IAM 13836 / NRRL 3357 / JCM 12722 / SRRC 167).